We begin with the raw amino-acid sequence, 557 residues long: uncharacterized protein (557 aa).

The signal sequence occupies residues 1–30 (MAPRRRRHTRIAGLRVVGTATLVAATTLTA). The N-palmitoyl cysteine moiety is linked to residue Cys-31. Cys-31 carries S-diacylglycerol cysteine lipidation.

The protein to M.bovis Mb2616c and M.leprae ML0489.

The protein localises to the cell membrane. This is an uncharacterized protein from Mycobacterium tuberculosis (strain CDC 1551 / Oshkosh).